The sequence spans 845 residues: ATPase morc-1 (845 aa).

ATP contacts are provided by residues Asn43, 88-90 (SAK), and 97-103 (RYGNGLK). Mg(2+) is bound at residue Asn43. Positions 284-311 (AAYNKILDEKNETVKKCEEEKALVMSEI) form a coiled coil. Lys422 contacts ATP. Disordered regions lie at residues 566–590 (LPQK…SASS) and 628–739 (KMEP…GKAV). The span at 574–590 (SAPSSSDSQNSIRSASS) shows a compositional bias: low complexity. Positions 637-646 (HDSHIAEVQR) are enriched in basic and acidic residues.

In terms of assembly, predominantly forms monomers and dimers, but multimerizes to form trimers and tetramers upon DNA binding. In terms of tissue distribution, expressed in germline and somatic cells.

Its subcellular location is the nucleus. The protein resides in the nuclear body. It carries out the reaction ATP + H2O = ADP + phosphate + H(+). In terms of biological role, binds non-specifically to DNA and forms static foci which grow by recruiting other morc-1 molecules, and thereby stimulates conformational changes and compaction of DNA, which appears to be enhanced by ATP-binding, but does not require ATP activity. Preferentially binds to long DNAs. Compacts and entraps segments of DNA by sequentially forming loops along the DNA, beginning at the free ends of single- and double-tethered DNA. Does not extrude the DNA loops on compacted double-tethered DNA. Involved in gene silencing. Plays a role in germline RNA interference (RNAi), and in particular, the silencing of endogenous small interfering RNA (endo-siRNA) target genes. May play a role in heterochromatin localization and condensation, and the siRNAi-directed trimethylation of 'Lys-9' of histone H3 in hermaphrodite X chromosomes. Promotes transgenerational epigenetic inheritance and germline immortality. The polypeptide is ATPase morc-1 (Caenorhabditis elegans).